A 637-amino-acid polypeptide reads, in one-letter code: Chaperone protein HtpG (637 aa).

The tract at residues 1-328 (MADIEELKFD…SSDLPLNISR (328 aa)) is a; substrate-binding. A b region spans residues 329–556 (ETLQNNRIVE…DNSMDIRMER (228 aa)). Residues 488–508 (IGASDDSGDKTSEDSGESASD) form a disordered region. Residues 494-508 (SGDKTSEDSGESASD) show a composition bias toward basic and acidic residues. The tract at residues 557–637 (FLREQKQLNY…GVLAKIFSSK (81 aa)) is c.

The protein belongs to the heat shock protein 90 family. Homodimer.

Its subcellular location is the cytoplasm. Its function is as follows. Molecular chaperone. Has ATPase activity. The chain is Chaperone protein HtpG from Anaplasma phagocytophilum (strain HZ).